A 164-amino-acid chain; its full sequence is Crossover junction endodeoxyribonuclease RuvC (164 aa).

Catalysis depends on residues D7, E67, and D140. Mg(2+) contacts are provided by D7, E67, and D140.

This sequence belongs to the RuvC family. As to quaternary structure, homodimer which binds Holliday junction (HJ) DNA. The HJ becomes 2-fold symmetrical on binding to RuvC with unstacked arms; it has a different conformation from HJ DNA in complex with RuvA. In the full resolvosome a probable DNA-RuvA(4)-RuvB(12)-RuvC(2) complex forms which resolves the HJ. Mg(2+) serves as cofactor.

The protein resides in the cytoplasm. The enzyme catalyses Endonucleolytic cleavage at a junction such as a reciprocal single-stranded crossover between two homologous DNA duplexes (Holliday junction).. Its function is as follows. The RuvA-RuvB-RuvC complex processes Holliday junction (HJ) DNA during genetic recombination and DNA repair. Endonuclease that resolves HJ intermediates. Cleaves cruciform DNA by making single-stranded nicks across the HJ at symmetrical positions within the homologous arms, yielding a 5'-phosphate and a 3'-hydroxyl group; requires a central core of homology in the junction. The consensus cleavage sequence is 5'-(A/T)TT(C/G)-3'. Cleavage occurs on the 3'-side of the TT dinucleotide at the point of strand exchange. HJ branch migration catalyzed by RuvA-RuvB allows RuvC to scan DNA until it finds its consensus sequence, where it cleaves and resolves the cruciform DNA. The protein is Crossover junction endodeoxyribonuclease RuvC of Chloroflexus aggregans (strain MD-66 / DSM 9485).